A 63-amino-acid polypeptide reads, in one-letter code: MKANELREKSVEELNTELLNLLREEFNLRMQAAGGQLQQSHLLKQVRRNIARVKTLLNEKAGA.

The protein belongs to the universal ribosomal protein uL29 family.

The polypeptide is Large ribosomal subunit protein uL29 (Edwardsiella ictaluri (strain 93-146)).